A 572-amino-acid chain; its full sequence is Hexokinase (572 aa).

Residues 49-492 enclose the Hexokinase domain; that stretch reads DEPPISLETV…SGKGAALITA (444 aa). The hexokinase small subdomain stretch occupies residues 105–237; it reads NGTEEGRFIA…DIKVEVVALI (133 aa). D-glucose 6-phosphate is bound by residues 116 to 120 and Ser-185; that span reads DLGGT. An ATP-binding site is contributed by 116–121; that stretch reads DLGGTN. Substrate-binding positions include 185 to 186, 202 to 203, and 238 to 239; these read SY, TK, and ND. A hexokinase large subdomain region spans residues 238–481; that stretch reads NDTVGTMVAA…LKFKLLQTAD (244 aa). The D-glucose 6-phosphate site is built by Asp-239 and Thr-263. Thr-263 serves as a coordination point for ATP. 3 residues coordinate substrate: Asn-266, Glu-297, and Asp-331. Residues 336–337, 373–377, and 448–452 contribute to the ATP site; these read GK, TKYIS, and STYKY. D-glucose 6-phosphate contacts are provided by residues 446 to 448 and Ser-483; that span reads DGS.

The protein belongs to the hexokinase family.

It catalyses the reaction a D-hexose + ATP = a D-hexose 6-phosphate + ADP + H(+). It carries out the reaction D-mannose + ATP = D-mannose 6-phosphate + ADP + H(+). The enzyme catalyses D-fructose + ATP = D-fructose 6-phosphate + ADP + H(+). The catalysed reaction is D-glucose + ATP = D-glucose 6-phosphate + ADP + H(+). It participates in carbohydrate metabolism; hexose metabolism. Its pathway is carbohydrate degradation; glycolysis; D-glyceraldehyde 3-phosphate and glycerone phosphate from D-glucose: step 1/4. With respect to regulation, activated by glucose-6-phosphate. Inhibited by N-acetylglucosamine, glucosamine, mannoheptulose and ADP. In terms of biological role, active against glucose, fructose, mannose, maltose and galactose. This chain is Hexokinase, found in Brugia malayi (Filarial nematode worm).